The sequence spans 138 residues: Acidic phospholipase A2 CH-E6' (138 aa).

The N-terminal stretch at 1–16 is a signal peptide; the sequence is MRTLWIVAVLLLGVEG. Intrachain disulfides connect C42–C131, C44–C60, C59–C111, C65–C138, C66–C104, C73–C97, and C91–C102. Ca(2+)-binding residues include Y43, G45, and G47. The active site involves H63. A Ca(2+)-binding site is contributed by D64. The active site involves D105.

The protein belongs to the phospholipase A2 family. Group II subfamily. D49 sub-subfamily. Requires Ca(2+) as cofactor. Expressed by the venom gland.

It is found in the secreted. It catalyses the reaction a 1,2-diacyl-sn-glycero-3-phosphocholine + H2O = a 1-acyl-sn-glycero-3-phosphocholine + a fatty acid + H(+). In terms of biological role, snake venom phospholipase A2 (PLA2) that shows high lipolytic and weak ADP-induced platelet aggregation activities. Also shows weak anticoagulant activity. PLA2 catalyzes the calcium-dependent hydrolysis of the 2-acyl groups in 3-sn-phosphoglycerides. In Crotalus horridus (Timber rattlesnake), this protein is Acidic phospholipase A2 CH-E6'.